Reading from the N-terminus, the 84-residue chain is Small ribosomal subunit protein bS18B (84 aa).

The span at Met1 to Lys10 shows a compositional bias: basic residues. The tract at residues Met1–Lys20 is disordered.

This sequence belongs to the bacterial ribosomal protein bS18 family. As to quaternary structure, part of the 30S ribosomal subunit. Forms a tight heterodimer with protein bS6.

Functionally, binds as a heterodimer with protein bS6 to the central domain of the 16S rRNA, where it helps stabilize the platform of the 30S subunit. This Nocardia farcinica (strain IFM 10152) protein is Small ribosomal subunit protein bS18B.